The chain runs to 62 residues: UPF0337 protein XAC0100 (62 aa).

The protein belongs to the UPF0337 (CsbD) family.

The chain is UPF0337 protein XAC0100 from Xanthomonas axonopodis pv. citri (strain 306).